Consider the following 250-residue polypeptide: Probable transcriptional regulatory protein Mkms_2298 (250 aa).

Belongs to the TACO1 family.

It is found in the cytoplasm. The chain is Probable transcriptional regulatory protein Mkms_2298 from Mycobacterium sp. (strain KMS).